The sequence spans 979 residues: Receptor-type tyrosine-protein phosphatase-like N (979 aa).

A signal peptide spans 1 to 37 (MRRPRRPGGSGGSGGSGGLRLLVCLLLLSGRPGGCSA). An RESP18 homology domain region spans residues 38-134 (ISAHGCLFDR…HPRDRSGLVP (97 aa)). Over 38 to 575 (ISAHGCLFDR…RQAHGISPMR (538 aa)) the chain is Lumenal. Residues C56 and C65 are joined by a disulfide bond. Basic and acidic residues predominate over residues 113–130 (MERIPRLRPPEPHPRDRS). Disordered regions lie at residues 113-173 (MERI…GSPL), 289-330 (GRAR…AAQP), and 392-443 (MQRG…SSSV). Polar residues predominate over residues 145-155 (TQGNPTGSSPA). Over residues 303–322 (RAEDSSEGHEEEVLGGRGEK) the composition is skewed to basic and acidic residues. A phosphoserine mark is found at S307 and S308. Residues 414 to 424 (SPASSEVQQVL) show a composition bias toward polar residues. Residues 449–575 (SPLGQSQPTV…RQAHGISPMR (127 aa)) form a sufficient for dimerization of proICA512 region. N-linked (GlcNAc...) asparagine glycosylation is found at N506 and N524. The helical transmembrane segment at 576 to 600 (SVLLTLVALAGVAGLLVALAVALCM) threads the bilayer. A sufficient for dimerization of proICA512 region spans residues 601-732 (RHHSRQRDKE…PNTCAAAQDE (132 aa)). Over 601 to 979 (RHHSRQRDKE…VNAILKALPQ (379 aa)) the chain is Cytoplasmic. The tract at residues 644–680 (RAEGQPEPSRVSSVSSQFSDAAQASPSSHSSTPSWCE) is disordered. The segment covering 648 to 677 (QPEPSRVSSVSSQFSDAAQASPSSHSSTPS) has biased composition (low complexity). A Tyrosine-protein phosphatase domain is found at 709–969 (LAKEWQALCA…EFALTAVAEE (261 aa)). Residue K754 forms a Glycyl lysine isopeptide (Lys-Gly) (interchain with G-Cter in SUMO) linkage.

It belongs to the protein-tyrosine phosphatase family. Receptor class 8 subfamily. Homodimer; shown for the unprocessed protein (proICA512) in the endoplasmic reticulum and resolved during protein maturation as ICA512-TMF seems to be predominantly monomeric in secretory granules; however, ICA512-CCF interacts with ICA512-TMF disrupting the ICA512-TMF:SNTB2 complex. The isolated lumenal RESP18 homology domain has been shown to form disulfide-linked homooligomers. Interacts (via cytoplasmic domain) with phosphorylated SNTB2; this protects PTPRN against cleavage by CAPN1 to produce ICA512-CCF. Dephosphorylation of SNTB2 upon insulin stimulation disrupts the interaction and results in PTPRN cleavage. Interacts with SNX19. ICA512-CCF interacts with PIAS4; in the nucleus. Interacts with STAT5B (phosphorylated); down-regulated by ICA512-CCF sumoylation; ICA512-CCF prevents STAT5B dephosphorylation; ICA512-CCF mediates interaction of STAT5B with PIAS4. Interacts (via RESP18 homology domain) with insulin and proinsulin. Interacts with PTPRN2, PTPRA and PTPRE. In terms of processing, subject to proteolytic cleavage at multiple sites. Subject to cleavage on a pair of basic residues. On exocytosis of secretory granules in pancreatic beta-cells ICA512-TMF is transiently inserted in the plasma-membrane and cleaved by mu-type calpain CPN1 to yield ICA512-CCF. O-glycosylated. Post-translationally, N-glycosylated. In terms of processing, sumoylated at two sites including Lys-754. Sumoylation decreases interaction with STAT5. As to expression, detected in pituitary. Detected in brain (at protein level). Detected in brain. Weakly expressed in the colon, intestine, stomach and pancreas.

The protein localises to the membrane. It is found in the cytoplasmic vesicle. Its subcellular location is the secretory vesicle membrane. The protein resides in the perikaryon. It localises to the cell projection. The protein localises to the axon. It is found in the synapse. Its subcellular location is the cell membrane. The protein resides in the endosome. It localises to the nucleus. Functionally, plays a role in vesicle-mediated secretory processes. Required for normal accumulation of secretory vesicles in hippocampus, pituitary and pancreatic islets. Required for the accumulation of normal levels of insulin-containing vesicles and preventing their degradation. Plays a role in insulin secretion in response to glucose stimuli. Required for normal accumulation of the neurotransmitters norepinephrine, dopamine and serotonin in the brain. In females, but not in males, required for normal accumulation and secretion of pituitary hormones, such as luteinizing hormone (LH) and follicle-stimulating hormone (FSH). Seems to lack intrinsic enzyme activity. Required to maintain normal levels of renin expression and renin release. May regulate catalytic active protein-tyrosine phosphatases such as PTPRA through dimerization. ICA512-TMF regulates dynamics and exocytosis of insulin secretory granules (SGs); binding of ICA512-TMF to SNTB2/beta-2-syntrophin is proposed to restrain SGs mobility and exocytosis by tethering them to the actin cytoskeleton depending on UTRN; the function is inhibited by cytoplasmic ICA512-CFF dimerizing with ICA512-TMF and displacing SNTB2. In terms of biological role, ICA512-CCF translocated to the nucleus promotes expression of insulin and other granule-related genes; the function implicates binding to and regulating activity of STAT5B probably by preventing its dephosphorylation and potentially by inducing its sumoylation by recruiting PIAS4. Enhances pancreatic beta-cell proliferation by converging with signaling by STAT5B and STAT3. ICA512-CCF located in the cytoplasm regulates dynamics and exocytosis of insulin secretory granules (SGs) by dimerizing with ICA512-TMF and displacing SNTB2 thus enhancing SGs mobility and exocytosis. The polypeptide is Receptor-type tyrosine-protein phosphatase-like N (Ptprn) (Mus musculus (Mouse)).